The sequence spans 354 residues: Guanine nucleotide-binding protein G(i) subunit alpha-3 (354 aa).

The N-myristoyl glycine moiety is linked to residue glycine 2. The S-palmitoyl cysteine moiety is linked to residue cysteine 3. Positions 32–354 (KEVKLLLLGA…KNNLKECGLY (323 aa)) constitute a G-alpha domain. The tract at residues 35–48 (KLLLLGAGESGKST) is G1 motif. Residues glycine 42, glutamate 43, serine 44, glycine 45, lysine 46, serine 47, threonine 48, aspartate 150, serine 151, leucine 175, arginine 176, threonine 177, arginine 178, valine 179, lysine 180, threonine 181, valine 201, glycine 203, asparagine 269, lysine 270, aspartate 272, leucine 273, cysteine 325, alanine 326, and threonine 327 each contribute to the GTP site. Serine 47 is a Mg(2+) binding site. A G2 motif region spans residues 173–181 (DVLRTRVKT). Threonine 181 lines the Mg(2+) pocket. The segment at 196-205 (FKMFDVGGQR) is G3 motif. The G4 motif stretch occupies residues 265–272 (ILFLNKKD). The segment at 324-329 (TCATDT) is G5 motif.

Belongs to the G-alpha family. G(i/o/t/z) subfamily. In terms of assembly, heterotrimeric G proteins are composed of 3 units; alpha, beta and gamma. The alpha subunit contains the guanine nucleotide binding site. GTP binding causes dissociation of the heterotrimer, liberating the individual subunits so that they can interact with downstream effector proteins. Forms a complex with CCDC88A/GIV and EGFR which leads to enhanced EGFR signaling and triggering of cell migration; ligand stimulation is required for recruitment of GNAI3 to the complex. Interacts (inactive GDP-bound form) with CCDC88A/GIV (via GBA motif); the interaction leads to activation of GNAI3. Interacts (inactive GDP-bound form) with CCDC88C/DAPLE (via GBA motif); the interaction leads to activation of GNAI3. Interacts (inactive GDP-bound form) with NUCB1 (via GBA motif) and NUCB2 (via GBA motif); the interaction leads to activation of GNAI3. Interacts (inactive GDP-bound form) with PLCD4 (via GBA motif); the interaction leads to activation of GNAI3. Interacts with INSR; the interaction is probably mediated by CCDC88A/GIV. Interacts with GPSM1. Interacts (GDP-bound form) with GPSM2 (via GoLoco domains). Does not interact with RGS2. Interacts with RGS8 and RGS10; this strongly enhances the intrinsic GTPase activity. Interacts with RGS16; this strongly enhances the intrinsic GTPase activity. Interacts with RGS12. Interacts (via active GTP- or inactive GDP-bound form) with RGS14. Interacts (via active GTP-bound form) with TRPC5 (via ANK repeats) in a homotetrameric ion channel; the interaction is direct and activates the channel activity. As to expression, ubiquitously expressed.

It localises to the cytoplasm. The protein localises to the cell membrane. It is found in the cytoskeleton. The protein resides in the microtubule organizing center. Its subcellular location is the centrosome. In terms of biological role, heterotrimeric guanine nucleotide-binding proteins (G proteins) function as transducers downstream of G protein-coupled receptors (GPCRs) in numerous signaling cascades. The alpha chain contains the guanine nucleotide binding site and alternates between an active, GTP-bound state and an inactive, GDP-bound state. Signaling by an activated GPCR promotes GDP release and GTP binding. The alpha subunit has a low GTPase activity that converts bound GTP to GDP, thereby terminating the signal. Both GDP release and GTP hydrolysis are modulated by numerous regulatory proteins. Signaling is mediated via effector proteins, such as adenylate cyclase. Inhibits adenylate cyclase activity, leading to decreased intracellular cAMP levels. Stimulates the activity of receptor-regulated K(+) channels. The active GTP-bound form prevents the association of RGS14 with centrosomes and is required for the translocation of RGS14 from the cytoplasm to the plasma membrane. May play a role in cell division. The active GTP-bound form activates the calcium permeant TRPC5 ion channels. The sequence is that of Guanine nucleotide-binding protein G(i) subunit alpha-3 (GNAI3) from Cavia porcellus (Guinea pig).